A 333-amino-acid polypeptide reads, in one-letter code: Glycerol-3-phosphate dehydrogenase [NAD(P)+] (333 aa).

Residues Trp12, Lys33, and Lys105 each coordinate NADPH. Lys105, Gly136, and Ser138 together coordinate sn-glycerol 3-phosphate. Ala140 provides a ligand contact to NADPH. Lys191, Asp244, Ser254, Arg255, and Asn256 together coordinate sn-glycerol 3-phosphate. Lys191 acts as the Proton acceptor in catalysis. Arg255 lines the NADPH pocket. Val279 and Glu281 together coordinate NADPH.

The protein belongs to the NAD-dependent glycerol-3-phosphate dehydrogenase family.

It is found in the cytoplasm. It carries out the reaction sn-glycerol 3-phosphate + NAD(+) = dihydroxyacetone phosphate + NADH + H(+). It catalyses the reaction sn-glycerol 3-phosphate + NADP(+) = dihydroxyacetone phosphate + NADPH + H(+). It participates in membrane lipid metabolism; glycerophospholipid metabolism. Catalyzes the reduction of the glycolytic intermediate dihydroxyacetone phosphate (DHAP) to sn-glycerol 3-phosphate (G3P), the key precursor for phospholipid synthesis. The chain is Glycerol-3-phosphate dehydrogenase [NAD(P)+] from Protochlamydia amoebophila (strain UWE25).